The chain runs to 431 residues: tRNA(Ile)-lysidine synthase (431 aa).

Position 19–24 (19–24) interacts with ATP; that stretch reads STGIDS.

The protein belongs to the tRNA(Ile)-lysidine synthase family.

It is found in the cytoplasm. It catalyses the reaction cytidine(34) in tRNA(Ile2) + L-lysine + ATP = lysidine(34) in tRNA(Ile2) + AMP + diphosphate + H(+). In terms of biological role, ligates lysine onto the cytidine present at position 34 of the AUA codon-specific tRNA(Ile) that contains the anticodon CAU, in an ATP-dependent manner. Cytidine is converted to lysidine, thus changing the amino acid specificity of the tRNA from methionine to isoleucine. In Staphylococcus aureus (strain COL), this protein is tRNA(Ile)-lysidine synthase.